Here is a 454-residue protein sequence, read N- to C-terminus: Apyrase (454 aa).

Residues 1 to 7 lie on the Cytoplasmic side of the membrane; sequence MLNQNSH. The chain crosses the membrane as a helical; Signal-anchor for type II membrane protein span at residues 8-28; it reads FIFIILAIFLVLPLSLLSKNV. Topologically, residues 29–454 are extracellular; it reads NAQIPLRRHL…TTNKIRVASS (426 aa). 48–58 contributes to the ATP binding site; sequence VIFDAGSTGSR. Asn-151 is a glycosylation site (N-linked (GlcNAc...) asparagine). The active-site Proton acceptor is the Glu-170. Residue 194-204 coordinates ATP; that stretch reads ATIDLGGGSVQ. Asn-262 carries an N-linked (GlcNAc...) asparagine glycan.

Belongs to the GDA1/CD39 NTPase family. Ca(2+) serves as cofactor. The N-terminus is blocked.

It localises to the membrane. It carries out the reaction a ribonucleoside 5'-triphosphate + 2 H2O = a ribonucleoside 5'-phosphate + 2 phosphate + 2 H(+). In terms of biological role, catalyzes the hydrolysis of phosphoanhydride bonds of nucleoside tri- and di-phosphates. This is Apyrase (RROP1) from Solanum tuberosum (Potato).